The chain runs to 87 residues: Cytochrome c6 (87 aa).

The heme c site is built by Cys10, Cys13, His14, and Met56.

The protein belongs to the cytochrome c family. PetJ subfamily. In terms of assembly, monomer. Post-translationally, binds 1 heme c group covalently per subunit.

It is found in the plastid. The protein resides in the chloroplast thylakoid lumen. Functions as an electron carrier between membrane-bound cytochrome b6-f and photosystem I in oxygenic photosynthesis. The polypeptide is Cytochrome c6 (petJ) (Euglena viridis (Cercaria viridis)).